The sequence spans 882 residues: DNA mismatch repair protein MutS (882 aa).

627–634 contacts ATP; that stretch reads GPNMAGKS.

It belongs to the DNA mismatch repair MutS family.

Functionally, this protein is involved in the repair of mismatches in DNA. It is possible that it carries out the mismatch recognition step. This protein has a weak ATPase activity. The chain is DNA mismatch repair protein MutS from Anaeromyxobacter dehalogenans (strain 2CP-C).